We begin with the raw amino-acid sequence, 154 residues long: CS6 fimbrial subunit A (154 aa).

Residues 1–18 (MKKTIGLILILASFGSHA) form the signal peptide.

Its subcellular location is the fimbrium. Its function is as follows. Fimbriae (also called pili), polar filaments radiating from the surface of the bacterium to a length of 0.5-1.5 micrometers and numbering 100-300 per cell, enable bacteria to colonize the epithelium of specific host organs. This Escherichia coli protein is CS6 fimbrial subunit A (cssA).